We begin with the raw amino-acid sequence, 55 residues long: Large ribosomal subunit protein bL33A (55 aa).

Belongs to the bacterial ribosomal protein bL33 family.

In Salinispora tropica (strain ATCC BAA-916 / DSM 44818 / JCM 13857 / NBRC 105044 / CNB-440), this protein is Large ribosomal subunit protein bL33A.